A 140-amino-acid chain; its full sequence is ATP synthase epsilon chain (140 aa).

It belongs to the ATPase epsilon chain family. F-type ATPases have 2 components, CF(1) - the catalytic core - and CF(0) - the membrane proton channel. CF(1) has five subunits: alpha(3), beta(3), gamma(1), delta(1), epsilon(1). CF(0) has three main subunits: a, b and c.

The protein resides in the cell inner membrane. Its function is as follows. Produces ATP from ADP in the presence of a proton gradient across the membrane. In Herminiimonas arsenicoxydans, this protein is ATP synthase epsilon chain.